The sequence spans 1167 residues: Carbamoyl phosphate synthase large chain (1167 aa).

Residues 1–455 (MPRRTDIKSI…SLQKALRGLE (455 aa)) form a carboxyphosphate synthetic domain region. R129, R221, G227, G228, E260, V262, E267, G293, V294, H295, Q337, and E351 together coordinate ATP. Residues 184–380 (LETRWNLGEG…IAKIAAKLAV (197 aa)) form the ATP-grasp 1 domain. 3 residues coordinate Mg(2+): Q337, E351, and N353. Mn(2+) is bound by residues Q337, E351, and N353. The tract at residues 456–619 (TGLTGLDEIE…PFAGALANEA (164 aa)) is oligomerization domain. The segment at 620–1031 (QVSSRKKVVI…AFAKSQLGAG (412 aa)) is carbamoyl phosphate synthetic domain. The region spanning 748–960 (QKLLHKLGLS…IAKIAARIMA (213 aa)) is the ATP-grasp 2 domain. R784, T844, L846, E851, G876, I877, H878, S879, Q919, and E931 together coordinate ATP. Mg(2+) contacts are provided by Q919, E931, and N933. Mn(2+)-binding residues include Q919, E931, and N933. Residues 1032-1167 (VDLPRSGTLF…EVRPLQEYFA (136 aa)) form the MGS-like domain. Positions 1032-1167 (VDLPRSGTLF…EVRPLQEYFA (136 aa)) are allosteric domain.

This sequence belongs to the CarB family. Composed of two chains; the small (or glutamine) chain promotes the hydrolysis of glutamine to ammonia, which is used by the large (or ammonia) chain to synthesize carbamoyl phosphate. Tetramer of heterodimers (alpha,beta)4. Requires Mg(2+) as cofactor. The cofactor is Mn(2+).

The enzyme catalyses hydrogencarbonate + L-glutamine + 2 ATP + H2O = carbamoyl phosphate + L-glutamate + 2 ADP + phosphate + 2 H(+). The catalysed reaction is hydrogencarbonate + NH4(+) + 2 ATP = carbamoyl phosphate + 2 ADP + phosphate + 2 H(+). It participates in amino-acid biosynthesis; L-arginine biosynthesis; carbamoyl phosphate from bicarbonate: step 1/1. The protein operates within pyrimidine metabolism; UMP biosynthesis via de novo pathway; (S)-dihydroorotate from bicarbonate: step 1/3. Large subunit of the glutamine-dependent carbamoyl phosphate synthetase (CPSase). CPSase catalyzes the formation of carbamoyl phosphate from the ammonia moiety of glutamine, carbonate, and phosphate donated by ATP, constituting the first step of 2 biosynthetic pathways, one leading to arginine and/or urea and the other to pyrimidine nucleotides. The large subunit (synthetase) binds the substrates ammonia (free or transferred from glutamine from the small subunit), hydrogencarbonate and ATP and carries out an ATP-coupled ligase reaction, activating hydrogencarbonate by forming carboxy phosphate which reacts with ammonia to form carbamoyl phosphate. The protein is Carbamoyl phosphate synthase large chain of Mesorhizobium japonicum (strain LMG 29417 / CECT 9101 / MAFF 303099) (Mesorhizobium loti (strain MAFF 303099)).